A 357-amino-acid polypeptide reads, in one-letter code: Protein XRP2 (357 aa).

Positions 1 to 11 (MGCFFSKRRKP) are enriched in basic residues. The interval 1–39 (MGCFFSKRRKPAQGGQQQGASQEPAAGEEKAPQYSWDQR) is disordered. Gly2 carries the N-myristoyl glycine lipid modification. The S-palmitoyl cysteine moiety is linked to residue Cys3. Residues 12–25 (AQGGQQQGASQEPA) are compositionally biased toward low complexity. The C-CAP/cofactor C-like domain maps to 32–186 (PQYSWDQRAK…TWSNIHDFTP (155 aa)). Residues 105–106 (GS) and 122–125 (QQFR) contribute to the GTP site.

This sequence belongs to the TBCC family. In terms of processing, myristoylated on Gly-2; which may be required for membrane targeting. Post-translationally, palmitoylated on Cys-3; which may be required for plasma membrane targeting.

Its subcellular location is the cell membrane. Its function is as follows. Acts as a GTPase-activating protein (GAP) for tubulin in concert with tubulin-specific chaperone C, but does not enhance tubulin heterodimerization. Acts as a GTPase-activating protein. May act as guanine nucleotide dissociation inhibitor towards ADP-ribosylation factor-like proteins. This chain is Protein XRP2 (RP2), found in Gallus gallus (Chicken).